A 304-amino-acid polypeptide reads, in one-letter code: GMP synthase [glutamine-hydrolyzing] subunit B (304 aa).

In terms of domain architecture, GMPS ATP-PPase spans 2 to 183 (VKVEKFIPNA…LDLPEEICER (182 aa)). ATP is bound at residue 28–34 (SGGVDSS).

In terms of assembly, heterodimer composed of a glutamine amidotransferase subunit (A) and a GMP-binding subunit (B).

The catalysed reaction is XMP + L-glutamine + ATP + H2O = GMP + L-glutamate + AMP + diphosphate + 2 H(+). It functions in the pathway purine metabolism; GMP biosynthesis; GMP from XMP (L-Gln route): step 1/1. Catalyzes the synthesis of GMP from XMP. The chain is GMP synthase [glutamine-hydrolyzing] subunit B from Methanococcoides burtonii (strain DSM 6242 / NBRC 107633 / OCM 468 / ACE-M).